Consider the following 319-residue polypeptide: L-lactate dehydrogenase (319 aa).

Residues 10–11 (RV), D32, R37, Y62, and 76–77 (GV) contribute to the NAD(+) site. Substrate is bound by residues Q79, R85, and 117–120 (NPVD). Residues 115 to 117 (VTN) and S140 each bind NAD(+). 145-148 (DTAR) is a binding site for substrate. R150 and H165 together coordinate beta-D-fructose 1,6-bisphosphate. H172 acts as the Proton acceptor in catalysis. Y217 carries the post-translational modification Phosphotyrosine. T226 contacts substrate.

It belongs to the LDH/MDH superfamily. LDH family. In terms of assembly, homotetramer.

It is found in the cytoplasm. It carries out the reaction (S)-lactate + NAD(+) = pyruvate + NADH + H(+). The protein operates within fermentation; pyruvate fermentation to lactate; (S)-lactate from pyruvate: step 1/1. With respect to regulation, allosterically activated by fructose 1,6-bisphosphate (FBP). Inactivated by Mn(2+), Co(2+), Cd(2+) and Zn(2+). Functionally, catalyzes the conversion of lactate to pyruvate. It is stereospecific for L(+)-lactate. In Thermotoga maritima (strain ATCC 43589 / DSM 3109 / JCM 10099 / NBRC 100826 / MSB8), this protein is L-lactate dehydrogenase.